We begin with the raw amino-acid sequence, 78 residues long: Acyl carrier protein (78 aa).

Residues Ser2–Ser77 form the Carrier domain. An O-(pantetheine 4'-phosphoryl)serine modification is found at Ser37.

It belongs to the acyl carrier protein (ACP) family. Post-translationally, 4'-phosphopantetheine is transferred from CoA to a specific serine of apo-ACP by AcpS. This modification is essential for activity because fatty acids are bound in thioester linkage to the sulfhydryl of the prosthetic group.

The protein resides in the cytoplasm. It participates in lipid metabolism; fatty acid biosynthesis. Its function is as follows. Carrier of the growing fatty acid chain in fatty acid biosynthesis. This Brucella abortus (strain S19) protein is Acyl carrier protein.